The chain runs to 584 residues: Arginine--tRNA ligase (584 aa).

The 'HIGH' region motif lies at 125–135; that stretch reads PNIAKEMHVGH.

It belongs to the class-I aminoacyl-tRNA synthetase family. Monomer.

The protein localises to the cytoplasm. The enzyme catalyses tRNA(Arg) + L-arginine + ATP = L-arginyl-tRNA(Arg) + AMP + diphosphate. The sequence is that of Arginine--tRNA ligase from Thermosynechococcus vestitus (strain NIES-2133 / IAM M-273 / BP-1).